A 508-amino-acid chain; its full sequence is Steroid 17-alpha-hydroxylase/17,20 lyase (508 aa).

Residue Cys-442 coordinates heme.

This sequence belongs to the cytochrome P450 family. The cofactor is heme.

It localises to the endoplasmic reticulum membrane. The protein resides in the microsome membrane. The enzyme catalyses a C21-steroid + reduced [NADPH--hemoprotein reductase] + O2 = a 17alpha-hydroxy-C21-steroid + oxidized [NADPH--hemoprotein reductase] + H2O + H(+). It catalyses the reaction progesterone + reduced [NADPH--hemoprotein reductase] + O2 = 17alpha-hydroxyprogesterone + oxidized [NADPH--hemoprotein reductase] + H2O + H(+). It carries out the reaction pregnenolone + reduced [NADPH--hemoprotein reductase] + O2 = 17alpha-hydroxypregnenolone + oxidized [NADPH--hemoprotein reductase] + H2O + H(+). The catalysed reaction is 17alpha-hydroxyprogesterone + reduced [NADPH--hemoprotein reductase] + O2 = androst-4-ene-3,17-dione + acetate + oxidized [NADPH--hemoprotein reductase] + H2O + 2 H(+). The enzyme catalyses 17alpha-hydroxyprogesterone + reduced [NADPH--hemoprotein reductase] + O2 = 16alpha,17alpha-dihydroxyprogesterone + oxidized [NADPH--hemoprotein reductase] + H2O + H(+). It catalyses the reaction 16alpha,17alpha-dihydroxyprogesterone + reduced [NADPH--hemoprotein reductase] + O2 = 6beta,16alpha,17alpha-trihydroxyprogesterone + oxidized [NADPH--hemoprotein reductase] + H2O + H(+). It carries out the reaction 17alpha-hydroxypregnenolone + reduced [NADPH--hemoprotein reductase] + O2 = 3beta-hydroxyandrost-5-en-17-one + acetate + oxidized [NADPH--hemoprotein reductase] + H2O + 2 H(+). The catalysed reaction is 16alpha,17alpha-dihydroxypregnenolone + reduced [NADPH--hemoprotein reductase] + O2 = 3beta,16alpha-dihydroxy-androst-5-en-17-one + acetate + oxidized [NADPH--hemoprotein reductase] + H2O + 2 H(+). The enzyme catalyses 3beta-hydroxyandrost-5-en-17-one + reduced [NADPH--hemoprotein reductase] + O2 = 3beta,16alpha-dihydroxy-androst-5-en-17-one + oxidized [NADPH--hemoprotein reductase] + H2O + H(+). It catalyses the reaction androst-4-ene-3,17-dione + reduced [NADPH--hemoprotein reductase] + O2 = 16alpha-hydroxyandrost-4-ene-3,17-dione + oxidized [NADPH--hemoprotein reductase] + H2O + H(+). Its pathway is steroid hormone biosynthesis. It functions in the pathway steroid biosynthesis; glucocorticoid biosynthesis. Its activity is regulated as follows. Regulated predominantly by intracellular cAMP levels. The 17,20-lyase activity is stimulated by cytochrome b5, which acts as an allosteric effector increasing the Vmax of the lyase activity. A cytochrome P450 monooxygenase involved in corticoid and androgen biosynthesis. Catalyzes 17-alpha hydroxylation of C21 steroids, which is common for both pathways. A second oxidative step, required only for androgen synthesis, involves an acyl-carbon cleavage. The 17-alpha hydroxy intermediates, as part of adrenal glucocorticoids biosynthesis pathway, are precursors of cortisol. Hydroxylates steroid hormones, pregnenolone and progesterone to form 17-alpha hydroxy metabolites, followed by the cleavage of the C17-C20 bond to form C19 steroids, dehydroepiandrosterone (DHEA) and androstenedione. Has 16-alpha hydroxylase activity. Catalyzes 16-alpha hydroxylation of 17-alpha hydroxy pregnenolone, followed by the cleavage of the C17-C20 bond to form 16-alpha-hydroxy DHEA. Also 16-alpha hydroxylates androgens, relevant for estriol synthesis. Mechanistically, uses molecular oxygen inserting one oxygen atom into a substrate, and reducing the second into a water molecule, with two electrons provided by NADPH via cytochrome P450 reductase (CPR; NADPH-ferrihemoprotein reductase). This is Steroid 17-alpha-hydroxylase/17,20 lyase (CYP17A1) from Cavia porcellus (Guinea pig).